The following is a 49-amino-acid chain: Small, acid-soluble spore protein O (49 aa).

Residues 1–49 (MGKRKANHTISGMNAASAQGQGAGYNEEFANENLTPAERQNNKKRKKNQ) form a disordered region. The span at 8 to 20 (HTISGMNAASAQG) shows a compositional bias: polar residues.

This sequence belongs to the SspO family.

It is found in the spore core. This Bacillus anthracis (strain A0248) protein is Small, acid-soluble spore protein O.